The sequence spans 1869 residues: Chitin synthase csm1 (1869 aa).

Residues 1 to 778 (MAQHRCVGGN…CWMEIAQLSD (778 aa)) form the Myosin motor domain. Residue 103 to 110 (GESGSGKT) coordinates ATP. N-linked (GlcNAc...) asparagine glycosylation is found at N122, N290, N427, and N558. Residues 579–653 (HPQERTTVMQ…KPSEEGASGQ (75 aa)) are disordered. Over residues 583–593 (RTTVMQASVSS) the composition is skewed to polar residues. The tract at residues 658–682 (LDNVTKSFHAQNTNAYFVFCLKPND) is actin-binding. A glycan (N-linked (GlcNAc...) asparagine) is linked at N660. 2 helical membrane-spanning segments follow: residues 880 to 900 (WVFITWMLTFFVPEFLIQHLG) and 919 to 939 (FIIWFSCLAAAFILVVFPMLV). N-linked (GlcNAc...) asparagine glycans are attached at residues N1029, N1054, and N1120. The chain crosses the membrane as a helical span at residues 1191-1211 (FILAVTIILCSIIAFKFFAAL). 2 N-linked (GlcNAc...) asparagine glycosylation sites follow: N1448 and N1554. The next 3 helical transmembrane spans lie at 1579–1599 (FIVFIDLLSTIIQPFTIAYIV), 1612–1632 (VPVLAFVLLAAVYGLQAIIFI), and 1639–1659 (MIAWMILYIIAMPIFSFGLPL). The DEK-C domain occupies 1811-1866 (LPSDDALLAEIREILRTADLMTVTKKGVKQELERRFGVNLDSRRAYINSATEALLS).

The protein in the N-terminal section; belongs to the TRAFAC class myosin-kinesin ATPase superfamily. Myosin family. It in the C-terminal section; belongs to the chitin synthase family. Class V subfamily.

It is found in the cell membrane. The protein resides in the cell septum. It localises to the cell tip. It catalyses the reaction [(1-&gt;4)-N-acetyl-beta-D-glucosaminyl](n) + UDP-N-acetyl-alpha-D-glucosamine = [(1-&gt;4)-N-acetyl-beta-D-glucosaminyl](n+1) + UDP + H(+). Its function is as follows. Polymerizes chitin, a structural polymer of the cell wall and septum, by transferring the sugar moiety of UDP-GlcNAc to the non-reducing end of the growing chitin polymer. Involved in mycelial growth. This is Chitin synthase csm1 from Pyricularia grisea (Crabgrass-specific blast fungus).